Consider the following 432-residue polypeptide: MEFYLSSDCASLARYVSKVVYLEDNDIAHIYDGELHIHCSKIGSEDFSFRTVQKLELELSKIKKGPYDNFMQKEIYEQCETTKNVMRGRVDAFTNRVVLGGLENWLTELRRAKRIIMIASKASFHSCLAARPIFEELMEVPVNVELALDFVDRNCCIFRNDVCIFVSRSGETTDTINALNYCIKKEAVTIGVVNCSGSSISRFTHCGVHTNTGPEKGIATTKSYTSQYIALVMIALWMSEDLVSKIERRKEIIQALTIVPSQIKEVLELEPLIIELCDKKLKQHDTFLLLGRGYQFASALEGASKMKEISYVHSESILTNELGHRVLAVASDNPPIIAFATKDAFSPKIASCIDQIIERKGNPIIICNKGHKIWEQDKQKGNVVTLEVPQTVDCLQGILNVIPLQLISYWLAIKKDIGVDLPRDSAMSAPDI.

2 consecutive SIS domains span residues 105-244 and 277-422; these read WLTE…DLVS and CDKK…VDLP.

This is an uncharacterized protein from Saccharomyces cerevisiae (strain ATCC 204508 / S288c) (Baker's yeast).